The following is an 877-amino-acid chain: DNA polymerase I (877 aa).

The 5'-3' exonuclease domain maps to 1-310 (MKKKLVLIDG…FTLADRVTEE (310 aa)). A 3'-5' exonuclease domain is found at 311–465 (MLADKAALVV…ALERPFLDEL (155 aa)). Positions 469 to 877 (EQDRLLVELE…HYGSTWYDAK (409 aa)) are polymerase.

Belongs to the DNA polymerase type-A family. Single-chain monomer with multiple functions.

The enzyme catalyses DNA(n) + a 2'-deoxyribonucleoside 5'-triphosphate = DNA(n+1) + diphosphate. Its function is as follows. In addition to polymerase activity, this DNA polymerase exhibits 3'-5' and 5'-3' exonuclease activity. The polypeptide is DNA polymerase I (polA) (Bacillus caldotenax).